Reading from the N-terminus, the 431-residue chain is Enolase (431 aa).

Glutamine 163 contributes to the (2R)-2-phosphoglycerate binding site. The Proton donor role is filled by glutamate 205. 3 residues coordinate Mg(2+): aspartate 242, glutamate 288, and aspartate 315. Residues lysine 340, arginine 369, serine 370, and lysine 391 each coordinate (2R)-2-phosphoglycerate. The Proton acceptor role is filled by lysine 340.

This sequence belongs to the enolase family. Mg(2+) serves as cofactor.

The protein resides in the cytoplasm. The protein localises to the secreted. It localises to the cell surface. It carries out the reaction (2R)-2-phosphoglycerate = phosphoenolpyruvate + H2O. The protein operates within carbohydrate degradation; glycolysis; pyruvate from D-glyceraldehyde 3-phosphate: step 4/5. Functionally, catalyzes the reversible conversion of 2-phosphoglycerate (2-PG) into phosphoenolpyruvate (PEP). It is essential for the degradation of carbohydrates via glycolysis. The sequence is that of Enolase from Bacillus cereus (strain AH187).